We begin with the raw amino-acid sequence, 306 residues long: Recombination-associated protein RdgC (306 aa).

Belongs to the RdgC family.

The protein resides in the cytoplasm. It localises to the nucleoid. May be involved in recombination. The sequence is that of Recombination-associated protein RdgC from Pseudomonas fluorescens (strain SBW25).